An 80-amino-acid chain; its full sequence is Calmodulin (80 aa).

EF-hand domains follow at residues 12-47 (DSEE…LGEK) and 48-80 (LTDE…MTSK). Ca(2+) contacts are provided by Asp25, Asp27, Asn29, Glu36, Asp61, Asp63, Asp65, Gln67, and Glu72.

It belongs to the calmodulin family.

In terms of biological role, calmodulin mediates the control of a large number of enzymes, ion channels and other proteins by Ca(2+). Among the enzymes to be stimulated by the calmodulin-Ca(2+) complex are a number of protein kinases and phosphatases. This is Calmodulin from Strongylocentrotus purpuratus (Purple sea urchin).